A 688-amino-acid polypeptide reads, in one-letter code: Glycine--tRNA ligase beta subunit (688 aa).

The protein belongs to the class-II aminoacyl-tRNA synthetase family. As to quaternary structure, tetramer of two alpha and two beta subunits.

It is found in the cytoplasm. It catalyses the reaction tRNA(Gly) + glycine + ATP = glycyl-tRNA(Gly) + AMP + diphosphate. This chain is Glycine--tRNA ligase beta subunit, found in Aliivibrio fischeri (strain ATCC 700601 / ES114) (Vibrio fischeri).